The sequence spans 72 residues: MKVLLDIIEDIENFIRQLEKRRGELEELKDEILIFSDAEFIDSIQRGLSDLEQGRSKVCSNLEEVKKLFEDI.

This is an uncharacterized protein from Archaeoglobus fulgidus (strain ATCC 49558 / DSM 4304 / JCM 9628 / NBRC 100126 / VC-16).